The following is a 2036-amino-acid chain: Transmembrane channel-like protein (2036 aa).

Disordered stretches follow at residues 1-178 (MQND…IDDE) and 194-243 (SVRG…ESTQ). Residues 1 to 353 (MQNDEEPAAA…GVASYFTFLR (353 aa)) lie on the Cytoplasmic side of the membrane. Residues 58 to 73 (VGSSSSNGNTSNVATG) are compositionally biased toward low complexity. The span at 74-90 (ANSENNSGVTSPHQLSV) shows a compositional bias: polar residues. The span at 125 to 134 (ASQEDHRSYE) shows a compositional bias: basic and acidic residues. Residues 166–178 (FDEDGGGGDIDDE) are compositionally biased toward acidic residues. The segment covering 198 to 208 (YRGKRGSRSSR) has biased composition (basic residues). Residues 216-225 (HVLDSVERRR) show a composition bias toward basic and acidic residues. A compositionally biased stretch (polar residues) spans 227 to 243 (SVYTTSSEEGTNQESTQ). The helical transmembrane segment at 354–374 (WLMWVNIMIAIPLVAFVIGPE) threads the bilayer. Over 375–395 (YFATKHGETDPRKRMSDPEAR) the chain is Extracellular. The chain crosses the membrane as a helical span at residues 396-418 (VAGNLFTFWEFEGYLKYSPMFYG). The Cytoplasmic segment spans residues 419–432 (YYSSTSGISTSGYK). The chain crosses the membrane as a helical span at residues 433–453 (LPLAYFLTAVLVYIYSFVATL). At 454 to 526 (RKMAENSRNS…NRNWRVILQR (73 aa)) the chain is on the extracellular side. A helical transmembrane segment spans residues 527 to 547 (ILVNILVMGLLGLSGATVVLL). Over 548–567 (VNHSEDLAKHDNWLSRNAVN) the chain is Cytoplasmic. The chain crosses the membrane as a helical span at residues 568-588 (VTMTLLSFFLPMIFEALGLFE). Topologically, residues 589 to 599 (NWHPRQQLRLQ) are extracellular. A helical transmembrane segment spans residues 600 to 620 (LARIMILNMLNLYSLMFSFIY). Over 621 to 1308 (KINSKEKPLQ…ILTLINNQGQ (688 aa)) the chain is Cytoplasmic. 5 disordered regions span residues 789–839 (TTAT…TEAT), 860–967 (KPLG…TDQA), 996–1027 (FFTS…NATP), 1066–1143 (LRGR…EGSE), and 1186–1205 (GSTT…KQLT). The span at 870–885 (IPNSTTNSATLSTIPA) shows a compositional bias: polar residues. The span at 886–906 (TLNTTNLPLNSTTKLTTTTST) shows a compositional bias: low complexity. Polar residues predominate over residues 933–952 (TSDAPDNNSYSDITDYSSEP). Acidic residues predominate over residues 953–967 (SEIEDFDEQESTDQA). 3 stretches are compositionally biased toward low complexity: residues 1069–1083 (RITT…STTT), 1091–1100 (RTTTTELTST), and 1107–1130 (TTES…SSST). Residues 1309–1329 (VWMGIFFSPGLVLINLVKLMI) form a helical membrane-spanning segment. Residues 1330–1358 (MMYFRSWIVLTCNVPHEVVFKASKSNNFY) are Extracellular-facing. A helical transmembrane segment spans residues 1359–1379 (LSLLLTMLFLCVLPVGYAIVW). Residues 1380–1423 (LRPSWHCGPFSEYNRIAEFITNTTRNALPKQLHEPLDYLTSSST) lie on the Cytoplasmic side of the membrane. The chain crosses the membrane as a helical span at residues 1424–1444 (VIPLLLLLILIIYYLVSLTGA). Over 1445–2036 (LREANQDLRT…RIDIENEHEK (592 aa)) the chain is Extracellular. 3 disordered regions span residues 1527 to 1572 (LRKG…SRLQ), 1592 to 1841 (ERAR…SRQG), and 1859 to 1990 (KKDD…IPTI). Basic and acidic residues-rich tracts occupy residues 1538–1566 (SFVR…DKRF), 1614–1640 (KETH…DKKD), 1658–1668 (SPKDNEHDPDT), 1727–1743 (HIVD…EDKP), and 1777–1793 (PEPE…ERSS). Residues 1806 to 1838 (NEPSGTEEQDRSLPSPTPSQGQGHHQRQLSVLS) show a composition bias toward polar residues. Positions 1890 to 1899 (VLSSVSSSTA) are enriched in low complexity. Positions 1903–1914 (PPTPEPESPTPS) are enriched in pro residues. Positions 1976 to 1990 (QDSQSSIWSDNIPTI) are enriched in polar residues.

The protein belongs to the TMC family. Expressed in multi-dendritic neurons of the labellum (md-L), which extend elaborate dendritic arbors innervating the bases of taste hairs (at protein level). In larvae, expressed in class I and class II dendritic arborization (da) neurons and bipolar dendrite (bd) neurons (at protein level). In adults, expressed in various sensory neurons including those in the mouth parts, olfactory neurons in the antenna, wing bristle neurons, haltere neurons, arista neurons, and many other sensory neurons, including a subset of chordotonal (Cho) neurons. Expressed in md-L axon terminals, including those that project into the subesophageal zone (SEZ). Also expressed in a small number of local neurons in the adult ventral nerve cord (VNC), and projections extending from a few neurons in the legs or wing hinges. In the adult mouth, expressed in a few multi-dendritic neurons of the ventral cibarial sensory organ (VCSO); the multiple elaborate dendritic branches form a brush-like structure that faces the luminal side of the food-passing tunnel. Also expressed in the oviduct and uterus of adult females.

The protein resides in the cell membrane. Its subcellular location is the cell projection. It localises to the dendrite. Functionally, probable ion channel. Component of mechanosensitive neurons that participates in proprioception, sensing food texture, and directing egg-laying site selection (oviposition). Component of multi-dendritic neurons of the labellum (md-L) where it is required for sensing the hardness and viscosity of their food, enabling them to behaviorally discriminate their preferred softness and smoothness from harder and stickier food options. Required as part of oviposition site selection process to relay mechanosensory and chemosensory information on the hardness and sweetness of potential egg-laying substrates, thus ensuring females select the most optimal site for their eggs survival. Females determine the softest substrate for their eggs first by making a coarse evaluation of substrate hardness using mechanosensitive channels nan and Piezo in the leg tarsal bristles, followed by a much finer assessment using nan, iav and Tmc mechanosensitive channels on the labellum. This protein is required to sense subtle differences in substrate stiffness (between 0.25% and 0.3% agarose), likely acting in the md-L neurons. Also required in neurons on the labellum, including the md-Ls, and possibly in the brain, to inhibit discrimination of egg-laying substrates of different hardness if the substrate contains sucrose. During oviposition evaluation, activation of sweet neurons by sucrose enhances the activity of the Tmc neurons resulting in females losing their softness preference in favor of egg-laying sites that contain sucrose. Acts in the larvae peripheral sensory neurons, to contribute to proprioception and sensory feedback for normal forward crawling behavior. Required for the normal activity of the proprioceptive sensory dendrites, ddaE which show preferential responses to forward locomotion, and ddaD which show preferential responses to backward locomotion. The chain is Transmembrane channel-like protein from Drosophila melanogaster (Fruit fly).